The primary structure comprises 538 residues: Phosphoenolpyruvate carboxykinase (ATP) (538 aa).

Substrate contacts are provided by Arg64, Tyr205, and Lys211. ATP is bound by residues Lys211, His230, and 246-254; that span reads GLSGTGKTT. The Mn(2+) site is built by Lys211 and His230. Residue Asp267 coordinates Mn(2+). ATP-binding positions include Glu295, Arg331, 447–448, and Thr453; that span reads RI. Arg331 lines the substrate pocket.

The protein belongs to the phosphoenolpyruvate carboxykinase (ATP) family. As to quaternary structure, monomer. It depends on Mn(2+) as a cofactor.

The protein resides in the cytoplasm. The catalysed reaction is oxaloacetate + ATP = phosphoenolpyruvate + ADP + CO2. The protein operates within carbohydrate biosynthesis; gluconeogenesis. Its function is as follows. Involved in the gluconeogenesis. Catalyzes the conversion of oxaloacetate (OAA) to phosphoenolpyruvate (PEP) through direct phosphoryl transfer between the nucleoside triphosphate and OAA. The sequence is that of Phosphoenolpyruvate carboxykinase (ATP) from Pasteurella multocida (strain Pm70).